The chain runs to 231 residues: MSFLCGSASTSNKPIERKIVILGDGACGKTSLLNVFTRGYFPEVYEPTVFENYIHDIFVDSKHITLSLWDTAGQEEFDRLRSLSYSDTQCIMLCFSIDSRDSLENVQNKWVGEITDHCEGVKLVLVALKCDLRNNENESNAITPNNIQQDNSVSNDNGNNINSTSNGKNLISYEEGLAMAKKIGALRYLECSAKLNKGVNEAFTEAARVALTAGPVATEVKSDSGSSCTIM.

23–30 serves as a coordination point for GTP; that stretch reads GDGACGKT. Positions 45 to 53 match the Effector region motif; it reads YEPTVFENY. Residues 70–74 and 128–131 each bind GTP; these read DTAGQ and LKCD. Polar residues predominate over residues 139–150; it reads SNAITPNNIQQD. The interval 139–165 is disordered; sequence SNAITPNNIQQDNSVSNDNGNNINSTS. Over residues 151–165 the composition is skewed to low complexity; that stretch reads NSVSNDNGNNINSTS. Cysteine 228 is subject to Cysteine methyl ester. Cysteine 228 carries the S-farnesyl cysteine lipid modification. A propeptide spans 229–231 (removed in mature form); it reads TIM.

This sequence belongs to the small GTPase superfamily. Rho family. Interacts with TOS7.

Its subcellular location is the cell membrane. Activity is positively regulated by the GTPase activating protein (GAP) RGD1. Plays an important role in cell growth. Required to keep the uninucleated state. Modulates morphogenesis during bud growth via directing organization of the actin cytoskeleton and the position of the secretory machinery for exocytosis. This Saccharomyces cerevisiae (strain ATCC 204508 / S288c) (Baker's yeast) protein is GTP-binding protein RHO3.